A 562-amino-acid chain; its full sequence is Dihydroxy-acid dehydratase (562 aa).

Asp80 contacts Mg(2+). Cys121 contributes to the [2Fe-2S] cluster binding site. Mg(2+) contacts are provided by Asp122 and Lys123. At Lys123 the chain carries N6-carboxylysine. Residue Cys194 participates in [2Fe-2S] cluster binding. Glu446 provides a ligand contact to Mg(2+). Ser472 functions as the Proton acceptor in the catalytic mechanism.

This sequence belongs to the IlvD/Edd family. In terms of assembly, homodimer. The cofactor is [2Fe-2S] cluster. It depends on Mg(2+) as a cofactor.

It carries out the reaction (2R)-2,3-dihydroxy-3-methylbutanoate = 3-methyl-2-oxobutanoate + H2O. The catalysed reaction is (2R,3R)-2,3-dihydroxy-3-methylpentanoate = (S)-3-methyl-2-oxopentanoate + H2O. The protein operates within amino-acid biosynthesis; L-isoleucine biosynthesis; L-isoleucine from 2-oxobutanoate: step 3/4. It participates in amino-acid biosynthesis; L-valine biosynthesis; L-valine from pyruvate: step 3/4. Functions in the biosynthesis of branched-chain amino acids. Catalyzes the dehydration of (2R,3R)-2,3-dihydroxy-3-methylpentanoate (2,3-dihydroxy-3-methylvalerate) into 2-oxo-3-methylpentanoate (2-oxo-3-methylvalerate) and of (2R)-2,3-dihydroxy-3-methylbutanoate (2,3-dihydroxyisovalerate) into 2-oxo-3-methylbutanoate (2-oxoisovalerate), the penultimate precursor to L-isoleucine and L-valine, respectively. In Staphylococcus aureus (strain MRSA252), this protein is Dihydroxy-acid dehydratase.